The sequence spans 312 residues: Aspartate carbamoyltransferase catalytic subunit (312 aa).

Positions 58 and 59 each coordinate carbamoyl phosphate. Residue Lys86 coordinates L-aspartate. Residues Arg108, His136, and Gln139 each contribute to the carbamoyl phosphate site. Positions 169 and 223 each coordinate L-aspartate. 2 residues coordinate carbamoyl phosphate: Gly264 and Pro265.

The protein belongs to the aspartate/ornithine carbamoyltransferase superfamily. ATCase family. Heterododecamer (2C3:3R2) of six catalytic PyrB chains organized as two trimers (C3), and six regulatory PyrI chains organized as three dimers (R2).

The enzyme catalyses carbamoyl phosphate + L-aspartate = N-carbamoyl-L-aspartate + phosphate + H(+). Its pathway is pyrimidine metabolism; UMP biosynthesis via de novo pathway; (S)-dihydroorotate from bicarbonate: step 2/3. In terms of biological role, catalyzes the condensation of carbamoyl phosphate and aspartate to form carbamoyl aspartate and inorganic phosphate, the committed step in the de novo pyrimidine nucleotide biosynthesis pathway. This is Aspartate carbamoyltransferase catalytic subunit from Desulforapulum autotrophicum (strain ATCC 43914 / DSM 3382 / VKM B-1955 / HRM2) (Desulfobacterium autotrophicum).